We begin with the raw amino-acid sequence, 78 residues long: Ferredoxin (78 aa).

2 4Fe-4S ferredoxin-type domains span residues 2–29 and 30–59; these read FVIT…HEGP and DQYY…QEEF. 2 residues coordinate [3Fe-4S] cluster: Cys8 and Cys16. [4Fe-4S] cluster contacts are provided by Cys20, Cys39, Cys42, and Cys45. Residue Cys49 coordinates [3Fe-4S] cluster.

It depends on [3Fe-4S] cluster as a cofactor. [4Fe-4S] cluster is required as a cofactor.

In terms of biological role, ferredoxins are iron-sulfur proteins that transfer electrons in a wide variety of metabolic reactions. The protein is Ferredoxin of Alicyclobacillus acidocaldarius subsp. acidocaldarius (Bacillus acidocaldarius).